Here is a 637-residue protein sequence, read N- to C-terminus: Biosynthetic arginine decarboxylase (637 aa).

An N6-(pyridoxal phosphate)lysine modification is found at K107. Substrate is bound at residue 289 to 299 (LDVGGGLGVDY).

This sequence belongs to the Orn/Lys/Arg decarboxylase class-II family. SpeA subfamily. Mg(2+) is required as a cofactor. Requires pyridoxal 5'-phosphate as cofactor.

The catalysed reaction is L-arginine + H(+) = agmatine + CO2. Its function is as follows. Catalyzes the biosynthesis of agmatine from arginine. The sequence is that of Biosynthetic arginine decarboxylase from Thermosynechococcus vestitus (strain NIES-2133 / IAM M-273 / BP-1).